The chain runs to 263 residues: 4-hydroxy-tetrahydrodipicolinate reductase (263 aa).

NAD(+) is bound by residues 8 to 13 (GACGRM), D34, 99 to 101 (GTT), and 125 to 128 (SPNY). H157 functions as the Proton donor/acceptor in the catalytic mechanism. H158 serves as a coordination point for (S)-2,3,4,5-tetrahydrodipicolinate. Residue K161 is the Proton donor of the active site. 167–168 (GT) provides a ligand contact to (S)-2,3,4,5-tetrahydrodipicolinate.

The protein belongs to the DapB family.

The protein localises to the cytoplasm. The enzyme catalyses (S)-2,3,4,5-tetrahydrodipicolinate + NAD(+) + H2O = (2S,4S)-4-hydroxy-2,3,4,5-tetrahydrodipicolinate + NADH + H(+). It catalyses the reaction (S)-2,3,4,5-tetrahydrodipicolinate + NADP(+) + H2O = (2S,4S)-4-hydroxy-2,3,4,5-tetrahydrodipicolinate + NADPH + H(+). Its pathway is amino-acid biosynthesis; L-lysine biosynthesis via DAP pathway; (S)-tetrahydrodipicolinate from L-aspartate: step 4/4. Catalyzes the conversion of 4-hydroxy-tetrahydrodipicolinate (HTPA) to tetrahydrodipicolinate. The sequence is that of 4-hydroxy-tetrahydrodipicolinate reductase from Methanosarcina barkeri (strain Fusaro / DSM 804).